The sequence spans 105 residues: Small ribosomal subunit protein uS10 (105 aa).

The protein belongs to the universal ribosomal protein uS10 family. Part of the 30S ribosomal subunit.

Its function is as follows. Involved in the binding of tRNA to the ribosomes. The protein is Small ribosomal subunit protein uS10 of Roseobacter denitrificans (strain ATCC 33942 / OCh 114) (Erythrobacter sp. (strain OCh 114)).